The chain runs to 181 residues: Adenine phosphoribosyltransferase (181 aa).

The protein belongs to the purine/pyrimidine phosphoribosyltransferase family. Homodimer.

It is found in the cytoplasm. The catalysed reaction is AMP + diphosphate = 5-phospho-alpha-D-ribose 1-diphosphate + adenine. It functions in the pathway purine metabolism; AMP biosynthesis via salvage pathway; AMP from adenine: step 1/1. Functionally, catalyzes a salvage reaction resulting in the formation of AMP, that is energically less costly than de novo synthesis. This Brucella suis (strain ATCC 23445 / NCTC 10510) protein is Adenine phosphoribosyltransferase.